We begin with the raw amino-acid sequence, 155 residues long: 6,7-dimethyl-8-ribityllumazine synthase (155 aa).

Residues W22, 56–58 (SYE), and 80–82 (AVI) contribute to the 5-amino-6-(D-ribitylamino)uracil site. 85–86 (DT) is a (2S)-2-hydroxy-3-oxobutyl phosphate binding site. Residue H88 is the Proton donor of the active site. F113 provides a ligand contact to 5-amino-6-(D-ribitylamino)uracil. R127 contributes to the (2S)-2-hydroxy-3-oxobutyl phosphate binding site.

The protein belongs to the DMRL synthase family.

It carries out the reaction (2S)-2-hydroxy-3-oxobutyl phosphate + 5-amino-6-(D-ribitylamino)uracil = 6,7-dimethyl-8-(1-D-ribityl)lumazine + phosphate + 2 H2O + H(+). It functions in the pathway cofactor biosynthesis; riboflavin biosynthesis; riboflavin from 2-hydroxy-3-oxobutyl phosphate and 5-amino-6-(D-ribitylamino)uracil: step 1/2. Functionally, catalyzes the formation of 6,7-dimethyl-8-ribityllumazine by condensation of 5-amino-6-(D-ribitylamino)uracil with 3,4-dihydroxy-2-butanone 4-phosphate. This is the penultimate step in the biosynthesis of riboflavin. The polypeptide is 6,7-dimethyl-8-ribityllumazine synthase (Deinococcus radiodurans (strain ATCC 13939 / DSM 20539 / JCM 16871 / CCUG 27074 / LMG 4051 / NBRC 15346 / NCIMB 9279 / VKM B-1422 / R1)).